The following is a 701-amino-acid chain: Polyribonucleotide nucleotidyltransferase (701 aa).

Mg(2+)-binding residues include aspartate 489 and aspartate 495. One can recognise a KH domain in the interval 556-615 (PRIHTMKIHPDKIREVIGSGGKVIRSITEETGCAIDIEDDGTIRIASSDQASAEQAVKII). In terms of domain architecture, S1 motif spans 625-693 (GQVYEGKVVR…RQGRVKLTMK (69 aa)).

It belongs to the polyribonucleotide nucleotidyltransferase family. Mg(2+) is required as a cofactor.

It localises to the cytoplasm. It carries out the reaction RNA(n+1) + phosphate = RNA(n) + a ribonucleoside 5'-diphosphate. Functionally, involved in mRNA degradation. Catalyzes the phosphorolysis of single-stranded polyribonucleotides processively in the 3'- to 5'-direction. The protein is Polyribonucleotide nucleotidyltransferase of Magnetococcus marinus (strain ATCC BAA-1437 / JCM 17883 / MC-1).